The sequence spans 40 residues: Photosystem II reaction center protein J (40 aa).

The helical transmembrane segment at 8-28 (IPLWLIGTVTGILVIGLIGFF) threads the bilayer.

It belongs to the PsbJ family. In terms of assembly, PSII is composed of 1 copy each of membrane proteins PsbA, PsbB, PsbC, PsbD, PsbE, PsbF, PsbH, PsbI, PsbJ, PsbK, PsbL, PsbM, PsbT, PsbX, PsbY, PsbZ, Psb30/Ycf12, at least 3 peripheral proteins of the oxygen-evolving complex and a large number of cofactors. It forms dimeric complexes.

It localises to the plastid. Its subcellular location is the chloroplast thylakoid membrane. Functionally, one of the components of the core complex of photosystem II (PSII). PSII is a light-driven water:plastoquinone oxidoreductase that uses light energy to abstract electrons from H(2)O, generating O(2) and a proton gradient subsequently used for ATP formation. It consists of a core antenna complex that captures photons, and an electron transfer chain that converts photonic excitation into a charge separation. The protein is Photosystem II reaction center protein J of Zea mays (Maize).